The primary structure comprises 105 residues: uncharacterized protein (105 aa).

The protein localises to the cytoplasm. It localises to the nucleus. This is an uncharacterized protein from Schizosaccharomyces pombe (strain 972 / ATCC 24843) (Fission yeast).